The primary structure comprises 200 residues: Probable GTP-binding protein EngB (200 aa).

The EngB-type G domain maps to 26–200; sequence SIPEVALAGR…IYEIAQCIKK (175 aa). GTP-binding positions include 34–41, 61–65, 80–83, 147–150, and 179–181; these read GRSNVGKS, GCTRQ, DLPG, TKID, and VSS. The Mg(2+) site is built by Ser41 and Thr63.

Belongs to the TRAFAC class TrmE-Era-EngA-EngB-Septin-like GTPase superfamily. EngB GTPase family. Mg(2+) is required as a cofactor.

Its function is as follows. Necessary for normal cell division and for the maintenance of normal septation. The sequence is that of Probable GTP-binding protein EngB from Ehrlichia ruminantium (strain Welgevonden).